The chain runs to 202 residues: Small ribosomal subunit protein uS4c-1 (202 aa).

One can recognise an S4 RNA-binding domain in the interval 90–152 (MRLDNIVLRA…NKSRQLIDLN (63 aa)).

This sequence belongs to the universal ribosomal protein uS4 family. Part of the 30S ribosomal subunit. Contacts protein S5. The interaction surface between S4 and S5 is involved in control of translational fidelity.

It localises to the plastid. The protein resides in the chloroplast. Functionally, one of the primary rRNA binding proteins, it binds directly to 16S rRNA where it nucleates assembly of the body of the 30S subunit. With S5 and S12 plays an important role in translational accuracy. The protein is Small ribosomal subunit protein uS4c-1 of Cyanidium caldarium (Red alga).